We begin with the raw amino-acid sequence, 391 residues long: Lysophosphatidylinositol acyltransferase 10 (391 aa).

The next 5 helical transmembrane spans lie at 10–30, 52–72, 97–119, 323–343, and 347–367; these read LLGW…NYII, AISY…GVRI, WMYM…KISL, LTSL…IFFV, and QLGF…YGGI.

It belongs to the 1-acyl-sn-glycerol-3-phosphate acyltransferase family. As to expression, expressed in seam cells, vulval epithelial cells and the major epithelial syncytium hyp7, and in several head neurons including AIY interneurons.

Its subcellular location is the endoplasmic reticulum membrane. It carries out the reaction a 2-acyl-sn-glycero-3-phospho-D-myo-inositol + an acyl-CoA = a 1,2-diacyl-sn-glycero-3-phospho-(1D-myo-inositol) + CoA. The enzyme catalyses a 2-acyl-sn-glycero-3-phospho-D-myo-inositol + octadecanoyl-CoA = 1-octadecanoyl-2-acyl-sn-glycero-3-phospho-1D-myo-inositol + CoA. It functions in the pathway phospholipid metabolism; phosphatidylinositol metabolism. Acyltransferase required for the fatty acid remodeling of phosphatidylinositol (1,2-diacyl-sn-glycero-3-phosphoinositol or PI). Mediates the conversion of lysophosphatidylinositol (2-acylglycerophosphatidylinositol or LPI) into PI (LPIAT activity). Has preference for saturated and mono-unsaturated fatty acids as acyl donors and sn-2-acyl lysoPI (2-acyl-sn-glycero-3-phospho-D-myo-inositol) as acyl acceptor. Contributes to the asymmetric cell division of epithelial cells. Asymmetric cell division is the fundamental mechanism by which multicellular organisms generate cell diversity. In Caenorhabditis elegans, this protein is Lysophosphatidylinositol acyltransferase 10.